Reading from the N-terminus, the 434-residue chain is MAARRRHVAAGAGAPAPAAGEWAAVTAGGGAAWALSPVEEVGTKQELMRRTGLPPRDLRALDPALSSAASASSCRPSAITGRDRAVVVNLDRARAVITASEVLVPSPRDPAVAPLVRELRARLALAASPTPAPSPSPPQHGMAVGMDGSISPSQASRGGEEAAGNGKDGEALGGGDKALPFEFRALEVCLEFACKSLEHETCTLEKEAYPALDELTSKVSTLNLERVRQIKSRLVAISGKVQKVRDELEHLLDDDMDMAALHLTEKLAYQSSRFDIDKEASELEDHSSRDEEGVEGGGGGDGDDETIAGGGSFSPNTDELEILLESYFVQIDGTLNSLSTLREYVEDTEDYINMMLDEKQNQLLQMGILLSTGTLVSSCAIAVTGVFGINVHISLYDSPASSAAFPCAAAGIVAGSLALYLAALLCYKRAGILQ.

Disordered regions lie at residues 126–171 (AASP…DGEA) and 279–311 (EASE…AGGG). Residues 279 to 291 (EASELEDHSSRDE) are compositionally biased toward basic and acidic residues. A run of 2 helical transmembrane segments spans residues 367-387 (GILL…TGVF) and 405-425 (FPCA…AALL).

Belongs to the CorA metal ion transporter (MIT) (TC 1.A.35.5) family.

It is found in the membrane. Its function is as follows. Putative magnesium transporter. The chain is Putative magnesium transporter MRS2-D (MRS2-D) from Oryza sativa subsp. japonica (Rice).